A 179-amino-acid polypeptide reads, in one-letter code: UPF0316 protein BH0621 (179 aa).

The next 3 helical transmembrane spans lie at A9–V29, L41–L61, and I67–V87.

The protein belongs to the UPF0316 family.

It is found in the cell membrane. The protein is UPF0316 protein BH0621 of Halalkalibacterium halodurans (strain ATCC BAA-125 / DSM 18197 / FERM 7344 / JCM 9153 / C-125) (Bacillus halodurans).